The sequence spans 1181 residues: C5a peptidase (1181 aa).

Positions 1–31 (MRKKQKLPFDKLAIALMSTSILLNAQSDIKA) are cleaved as a signal peptide. Polar residues predominate over residues 33–52 (TVTEDTPATEQAVETPQPTA). The segment at 33–117 (TVTEDTPATE…PSQVKTLQEK (85 aa)) is disordered. The span at 70-81 (DDAEETIADDAN) shows a compositional bias: acidic residues. Positions 99 to 581 (KATIRDLNDP…AGAVDAKKAS (483 aa)) constitute a Peptidase S8 domain. Catalysis depends on charge relay system residues Asp130, His193, and Ser512. 4 stretches are compositionally biased toward basic and acidic residues: residues 1029-1054 (EGHSNKPEQDGSDQAPDKKPETKPEQ), 1061-1071 (PDKKPETKPEQ), 1078-1088 (PDKKPETKPEQ), and 1095-1107 (PDKKPETKPEKDS). Residues 1029-1150 (EGHSNKPEQD…KDQLPTTNDK (122 aa)) form a disordered region. 5 consecutive repeat copies span residues 1034 to 1050 (KPEQDGSDQAPDKKPET), 1051 to 1067 (KPEQDGSGQAPDKKPET), 1068 to 1084 (KPEQDGSGQTPDKKPET), 1085 to 1101 (KPEQDGSGQTPDKKPET), and 1102 to 1118 (KPEKDSSGQTPGKTPQK). The interval 1034–1118 (KPEQDGSDQA…GQTPGKTPQK (85 aa)) is 5 X 17 AA tandem repeats. 2 stretches are compositionally biased toward polar residues: residues 1109–1123 (GQTPGKTPQKGQPSR) and 1137–1147 (KASTKDQLPTT). The LPXTG sorting signal signature appears at 1144-1148 (LPTTN). Thr1147 is modified (pentaglycyl murein peptidoglycan amidated threonine). The propeptide at 1148–1181 (NDKDTNRLHLLKLVMTTFFLGLVAHIFKTKRTED) is removed by sortase.

Belongs to the peptidase S8 family. Post-translationally, cleaved by SpeB protease; leading to its degradation. Degradation by SpeB is probably strictly regulated to preserve integrity of C5a peptidase.

It is found in the secreted. The protein localises to the cell wall. It catalyses the reaction The primary cleavage site is at 67-His-|-Lys-68 in human C5a with a minor secondary cleavage site at 58-Ala-|-Ser-59.. This virulence factor of S.pyogenes specifically cleaves the human serum chemotaxin C5a at '68-Lys-|-Asp-69' bond near its C-terminus, destroying its ability to serve as a chemoattractant. This chain is C5a peptidase (scpA), found in Streptococcus pyogenes serotype M1.